A 102-amino-acid chain; its full sequence is Protein transport protein sec61 subunit beta (102 aa).

Residues 1–15 (MSSTKASGSVKNSAA) show a composition bias toward polar residues. Residues 1 to 53 (MSSTKASGSVKNSAASAPGGPKSQIRRRAAVEKNTKESNSGPAGARAAGAPGS) form a disordered region. At 1-72 (MSSTKASGSV…DEASGFKVDP (72 aa)) the chain is on the cytoplasmic side. Over residues 41 to 52 (GPAGARAAGAPG) the composition is skewed to low complexity. A helical transmembrane segment spans residues 73-93 (VVVMVLSVGFIASVFLLHIVA).

This sequence belongs to the SEC61-beta family. Heterotrimeric complex composed of SEC61, SBH1 and SSS1.

It is found in the endoplasmic reticulum membrane. Necessary for protein translocation in the endoplasmic reticulum. The chain is Protein transport protein sec61 subunit beta (sbh1) from Schizosaccharomyces pombe (strain 972 / ATCC 24843) (Fission yeast).